The primary structure comprises 175 residues: Large ribosomal subunit protein uL10 (175 aa).

This sequence belongs to the universal ribosomal protein uL10 family. Part of the ribosomal stalk of the 50S ribosomal subunit. The N-terminus interacts with L11 and the large rRNA to form the base of the stalk. The C-terminus forms an elongated spine to which L12 dimers bind in a sequential fashion forming a multimeric L10(L12)X complex.

In terms of biological role, forms part of the ribosomal stalk, playing a central role in the interaction of the ribosome with GTP-bound translation factors. This Mycobacterium sp. (strain JLS) protein is Large ribosomal subunit protein uL10.